A 430-amino-acid chain; its full sequence is Serine hydroxymethyltransferase 2 (430 aa).

(6S)-5,6,7,8-tetrahydrofolate contacts are provided by residues L128 and 132 to 134; that span reads GHL. K237 carries the post-translational modification N6-(pyridoxal phosphate)lysine.

This sequence belongs to the SHMT family. Homodimer. Pyridoxal 5'-phosphate is required as a cofactor.

The protein resides in the cytoplasm. It catalyses the reaction (6R)-5,10-methylene-5,6,7,8-tetrahydrofolate + glycine + H2O = (6S)-5,6,7,8-tetrahydrofolate + L-serine. It participates in one-carbon metabolism; tetrahydrofolate interconversion. Its pathway is amino-acid biosynthesis; glycine biosynthesis; glycine from L-serine: step 1/1. Its function is as follows. Catalyzes the reversible interconversion of serine and glycine with tetrahydrofolate (THF) serving as the one-carbon carrier. This reaction serves as the major source of one-carbon groups required for the biosynthesis of purines, thymidylate, methionine, and other important biomolecules. Also exhibits THF-independent aldolase activity toward beta-hydroxyamino acids, producing glycine and aldehydes, via a retro-aldol mechanism. This Rhodospirillum rubrum (strain ATCC 11170 / ATH 1.1.1 / DSM 467 / LMG 4362 / NCIMB 8255 / S1) protein is Serine hydroxymethyltransferase 2.